The primary structure comprises 236 residues: Thiamine import ATP-binding protein ThiQ (236 aa).

One can recognise an ABC transporter domain in the interval 2-230 (LKLEKITYLY…SAAKASVLGI (229 aa)). Position 32–39 (32–39 (GPSGAGKS)) interacts with ATP.

Belongs to the ABC transporter superfamily. Thiamine importer (TC 3.A.1.19.1) family. In terms of assembly, the complex is composed of two ATP-binding proteins (ThiQ), two transmembrane proteins (ThiP) and a solute-binding protein (ThiB).

The protein resides in the cell inner membrane. It catalyses the reaction thiamine(out) + ATP + H2O = thiamine(in) + ADP + phosphate + H(+). In terms of biological role, part of the ABC transporter complex ThiBPQ involved in thiamine import. Responsible for energy coupling to the transport system. The chain is Thiamine import ATP-binding protein ThiQ from Yersinia pseudotuberculosis serotype I (strain IP32953).